A 297-amino-acid chain; its full sequence is MNNYISGATTAIITPFKNGTLDEATYANLIQRQIDNNIDAICPVGTTGESATLSHDEHKRCIEIAVEVCKGSNAKVLAGAGSNATHEAIDIAKHAEACGVDALFSVSPYYNKPSQEGLYQHYKAIASAVEVPFMLYNVPGRTGVDILPDTVKRLFDDVWNIMGIKEATGSIERTVELLAKVPDLYVFSGDDSIDFPILASGGKGITSVTANLLPDMKADLTHAALRGDFKTSKAINDELFEINKVLFCESNPIPIKAAMYIAGLIDTLEYRLPLVPPSSENMKKIENVMKKYKIVGA.

Residue Thr47 coordinates pyruvate. Residue Tyr136 is the Proton donor/acceptor of the active site. The Schiff-base intermediate with substrate role is filled by Lys165. Thr206 contributes to the pyruvate binding site.

This sequence belongs to the DapA family. In terms of assembly, homotetramer; dimer of dimers.

It is found in the cytoplasm. The enzyme catalyses L-aspartate 4-semialdehyde + pyruvate = (2S,4S)-4-hydroxy-2,3,4,5-tetrahydrodipicolinate + H2O + H(+). It participates in amino-acid biosynthesis; L-lysine biosynthesis via DAP pathway; (S)-tetrahydrodipicolinate from L-aspartate: step 3/4. Functionally, catalyzes the condensation of (S)-aspartate-beta-semialdehyde [(S)-ASA] and pyruvate to 4-hydroxy-tetrahydrodipicolinate (HTPA). In Sulfurovum sp. (strain NBC37-1), this protein is 4-hydroxy-tetrahydrodipicolinate synthase.